Consider the following 140-residue polypeptide: MSDAGGDVQVAPAAVAQGPMDKEGALRAVLRAAHHADGLAKGLHETCKALDKREAHFCVLAENCDEPQYVKLVETLCAEHQIPLIKVADKKIIGEYCGLCKYDKEGKARKVVGCSSAVVTNWGNEEQGRAILTDYFASKN.

The protein belongs to the eukaryotic ribosomal protein eS12 family. As to quaternary structure, part of the small subunit (SSU) processome, composed of more than 70 proteins and the RNA chaperone small nucleolar RNA (snoRNA) U3. Subunit of the 40S ribosomal complex.

The protein localises to the nucleus. The protein resides in the nucleolus. Its function is as follows. Part of the small subunit (SSU) processome, first precursor of the small eukaryotic ribosomal subunit. During the assembly of the SSU processome in the nucleolus, many ribosome biogenesis factors, an RNA chaperone and ribosomal proteins associate with the nascent pre-rRNA and work in concert to generate RNA folding, modifications, rearrangements and cleavage as well as targeted degradation of pre-ribosomal RNA by the RNA exosome. Subunit of the 40S ribosomal complex. Involved in cold-warm shock-induced translocation of the RNA exosome components from the nucleolus to nucleoplasm. This chain is Small ribosomal subunit protein eS12 (rps-12), found in Caenorhabditis elegans.